Reading from the N-terminus, the 107-residue chain is DNA-directed RNA polymerase subunit omega (107 aa).

Residues 81–107 (MEEEAAKGNADAGQGEGDAPKTPGQDG) form a disordered region.

This sequence belongs to the RNA polymerase subunit omega family. In terms of assembly, the RNAP catalytic core consists of 2 alpha, 1 beta, 1 beta' and 1 omega subunit. When a sigma factor is associated with the core the holoenzyme is formed, which can initiate transcription.

The catalysed reaction is RNA(n) + a ribonucleoside 5'-triphosphate = RNA(n+1) + diphosphate. Functionally, promotes RNA polymerase assembly. Latches the N- and C-terminal regions of the beta' subunit thereby facilitating its interaction with the beta and alpha subunits. The sequence is that of DNA-directed RNA polymerase subunit omega from Alkalilimnicola ehrlichii (strain ATCC BAA-1101 / DSM 17681 / MLHE-1).